A 20-amino-acid polypeptide reads, in one-letter code: Bulb protein (20 aa).

The tract at residues 1–20 (APDVHTRXTQNGLPPGXLPS) is disordered.

The protein is Bulb protein of Narcissus pseudonarcissus (Daffodil).